Reading from the N-terminus, the 202-residue chain is tRNA (pseudouridine(54)-N(1))-methyltransferase (202 aa).

Positions 134 and 155 each coordinate S-adenosyl-L-methionine.

The protein belongs to the methyltransferase superfamily. TrmY family. In terms of assembly, homodimer.

The protein resides in the cytoplasm. The enzyme catalyses pseudouridine(54) in tRNA + S-adenosyl-L-methionine = N(1)-methylpseudouridine(54) in tRNA + S-adenosyl-L-homocysteine + H(+). Functionally, specifically catalyzes the N1-methylation of pseudouridine at position 54 (Psi54) in tRNAs. This chain is tRNA (pseudouridine(54)-N(1))-methyltransferase, found in Thermococcus gammatolerans (strain DSM 15229 / JCM 11827 / EJ3).